A 120-amino-acid polypeptide reads, in one-letter code: MKYTRKDSIIKRHRRVRKKVFGTSERPRLSVFRSNMHIYAQVIDDTKQHTLVAASTLEAEVKSTIKSGANCDASIQIGKLIAQRSLEKGIEKVVFDRGGNLYHGRVKALAEAAREAGLDF.

Belongs to the universal ribosomal protein uL18 family. In terms of assembly, part of the 50S ribosomal subunit; part of the 5S rRNA/L5/L18/L25 subcomplex. Contacts the 5S and 23S rRNAs.

This is one of the proteins that bind and probably mediate the attachment of the 5S RNA into the large ribosomal subunit, where it forms part of the central protuberance. The polypeptide is Large ribosomal subunit protein uL18 (Trichodesmium erythraeum (strain IMS101)).